Consider the following 913-residue polypeptide: Proline and serine-rich protein 1 (913 aa).

Position 1 is an N-acetylmethionine (Met1). 4 disordered regions span residues 233-291 (VPPP…PAVS), 488-507 (ASLSSLPNRNSDSPASATNK), 592-618 (SEPTSPPPSAFKGPAHPGTPVRGTLGL), and 888-913 (DGFPSYPSTPGTPFSLQTGLSQSGWQ). The span at 251–275 (LSSQSKPTQSQTFSTPASQLFSPHG) shows a compositional bias: polar residues. Over residues 276 to 291 (SSNPSTPAATPVPAVS) the composition is skewed to low complexity. Positions 488–506 (ASLSSLPNRNSDSPASATN) are enriched in polar residues. Over residues 893-913 (YPSTPGTPFSLQTGLSQSGWQ) the composition is skewed to polar residues.

Interacts with TET2 and OGT; this interaction mediates TET2 O-GlcNAcylation and stability by promoting the interaction between OGT and TET2. Interacts with KDM6A. Interacts with TET1. Post-translationally, glycosylated. Interaction with OGT leads to GlcNAcylation.

Mediates OGT interaction with and O-GlcNAcylation of TET2 to control TET2 stabilization at enhancers and CpG islands (CGIs). The polypeptide is Proline and serine-rich protein 1 (Mus musculus (Mouse)).